Consider the following 120-residue polypeptide: Transmembrane protein 010R (120 aa).

2 helical membrane-spanning segments follow: residues 40-60 and 72-92; these read FCGA…ATAT and SIFF…VWFL.

It belongs to the IIV-6 010R family.

The protein resides in the membrane. This is Transmembrane protein 010R from Invertebrate iridescent virus 6 (IIV-6).